The primary structure comprises 229 residues: ATP synthase subunit a (229 aa).

A run of 6 helical transmembrane segments spans residues 25-45 (ADAIAYTWLIIALLLILSMLA), 82-102 (FFPLIATLAIFILVSNLIGLV), 104-124 (GFFPPTANINTTAACAVIVFV), 142-162 (FLGPILWLAPMMFFIEVIGHF), 181-201 (LVLMIFFGLAPFLVPLPMMLM), and 202-222 (GVLVSFIQAFVFMLLAMIYIQ).

Belongs to the ATPase A chain family. As to quaternary structure, F-type ATPases have 2 components, CF(1) - the catalytic core - and CF(0) - the membrane proton channel. CF(1) has five subunits: alpha(3), beta(3), gamma(1), delta(1), epsilon(1). CF(0) has three main subunits: a(1), b(2) and c(9-12). The alpha and beta chains form an alternating ring which encloses part of the gamma chain. CF(1) is attached to CF(0) by a central stalk formed by the gamma and epsilon chains, while a peripheral stalk is formed by the delta and b chains.

The protein resides in the cell inner membrane. Key component of the proton channel; it plays a direct role in the translocation of protons across the membrane. This Geotalea uraniireducens (strain Rf4) (Geobacter uraniireducens) protein is ATP synthase subunit a.